A 353-amino-acid polypeptide reads, in one-letter code: uncharacterized protein (353 aa).

Helical transmembrane passes span 16–36 (AAYIIGFSFLAVSIILGISCG), 77–97 (VVLAALVGAALSIAGAAFQGL), 106–128 (YTLGVSSGASVGAVVTLFLGLHL), 140–160 (SVAAALATMAAVLFFSRLVHA), 167–187 (LILTGVITNSFLGAFISLIIA), 208–228 (GWSYVILFLPFFLLGTILLII), 263–283 (LLTGSAVAVSGTIGFVGLVIP), 296–316 (HLLPLSALLGAGFLVLADLLS), and 323–343 (IELPIGIITSLAGAPVFALIL).

The protein belongs to the binding-protein-dependent transport system permease family. FecCD subfamily. In terms of assembly, the complex is composed of two ATP-binding proteins (YvrA), two transmembrane proteins (YvrB) and a solute-binding protein (YvrC).

It is found in the cell membrane. Probably part of an ABC transporter complex. Probably responsible for the translocation of the substrate across the membrane. This is an uncharacterized protein from Bacillus subtilis (strain 168).